Reading from the N-terminus, the 226-residue chain is Clarin-3 (226 aa).

The chain crosses the membrane as a helical span at residues 8 to 28 (LMFLSGFLTSLGSVVVICSIL). A glycan (N-linked (GlcNAc...) asparagine) is linked at Asn46. 3 consecutive transmembrane segments (helical) span residues 92-112 (VVIL…VFTF), 128-148 (GVYT…VLFV), and 181-201 (FWLT…IIFY).

The protein belongs to the clarin family.

The protein resides in the membrane. In Mus musculus (Mouse), this protein is Clarin-3 (Clrn3).